A 471-amino-acid chain; its full sequence is MASLLIFPHLHHFDSSLDRREVLVVRHSQASRRFLTPKASINGSGITNGAAAETTSKPSRKGRKKKQTSTVIEKDNTETDPELNPELADYDDGIEFPYDDPPLVCCFGAVQKEFVPVVRVHDNPMHPDMYSQWKMLQWDPPEFGRAPGGPPSNVAISHVRLGGRAAFMGKVGEDDFGDELVLMMNQERVQTRAVKFDENSKTACTRVKIKFKDGKMMAETVKEPPEDSLFASELNLAVLKEARIFHFNSEVLTSPTMQSTLFTAIQWSKKFGGLIFFDLNLPLPLWRSRNETRKLIKKAWNEANIIEVSQQELEFLLDEDYYERRRNYTPQYFAEDFDQTKNRRDYYHYTPEEIKSLWHDKLKLLVVTDGTLRLHYYTPTFDGVVIGTEDVLITPFTCDRTGSGDAVVAGIMRKLTTCPEMFEDQDVMERQLRFAVAAGIIAQWTIGAVRGFPTESATQNLKEQVYVPSMW.

A chloroplast-targeting transit peptide spans 1-38 (MASLLIFPHLHHFDSSLDRREVLVVRHSQASRRFLTPK). The tract at residues 36-85 (TPKASINGSGITNGAAAETTSKPSRKGRKKKQTSTVIEKDNTETDPELNP) is disordered. A compositionally biased stretch (polar residues) spans 39–57 (ASINGSGITNGAAAETTSK). Over residues 58-67 (PSRKGRKKKQ) the composition is skewed to basic residues.

This sequence belongs to the carbohydrate kinase PfkB family. In terms of assembly, interacts with CITRX/TRXz. Interacts with PTAC7. Self-interacts. Binds to FLN2. Associates with the plastid-encoded RNA polymerase (PEP) complex.

Its subcellular location is the plastid. The protein resides in the chloroplast. Functionally, required for proper chloroplast development, most likely through regulating plastid-encoded polymerase (PEP) dependent chloroplast transcription. Acts as a component of the transcriptionally active plastid chromosome that is required for plastid gene expression. The sequence is that of Fructokinase-like 1, chloroplastic from Arabidopsis thaliana (Mouse-ear cress).